The chain runs to 230 residues: Demethylmenaquinone methyltransferase (230 aa).

Residues threonine 57, aspartate 77, aspartate 101 to isoleucine 102, and serine 118 contribute to the S-adenosyl-L-methionine site.

The protein belongs to the class I-like SAM-binding methyltransferase superfamily. MenG/UbiE family.

It catalyses the reaction a 2-demethylmenaquinol + S-adenosyl-L-methionine = a menaquinol + S-adenosyl-L-homocysteine + H(+). Its pathway is quinol/quinone metabolism; menaquinone biosynthesis; menaquinol from 1,4-dihydroxy-2-naphthoate: step 2/2. In terms of biological role, methyltransferase required for the conversion of demethylmenaquinol (DMKH2) to menaquinol (MKH2). The polypeptide is Demethylmenaquinone methyltransferase (Chlamydia felis (strain Fe/C-56) (Chlamydophila felis)).